A 148-amino-acid polypeptide reads, in one-letter code: Low molecular weight protein-tyrosine-phosphatase Etp (148 aa).

The active-site Nucleophile is the cysteine 13. Arginine 19 is a catalytic residue. The active-site Proton donor is the aspartate 119.

The protein belongs to the low molecular weight phosphotyrosine protein phosphatase family.

It carries out the reaction O-phospho-L-tyrosyl-[protein] + H2O = L-tyrosyl-[protein] + phosphate. Its function is as follows. Dephosphorylates etk. The chain is Low molecular weight protein-tyrosine-phosphatase Etp (etp) from Escherichia coli O157:H7.